Reading from the N-terminus, the 911-residue chain is Protein dead ringer (911 aa).

3 disordered regions span residues 1–44 (MQLR…DCDS), 67–87 (SGGG…LSHH), and 172–274 (HVTS…QNNG). Residues 19-34 (IERDSDLGDDLSHGDR) are compositionally biased toward basic and acidic residues. Ser30 is modified (phosphoserine). The residue at position 35 (Thr35) is a Phosphothreonine. Ser44 carries the post-translational modification Phosphoserine. Residues 174–201 (TSSPSGGNGSSYNGGTTPTNSSNSNATT) are compositionally biased toward low complexity. A compositionally biased stretch (gly residues) spans 202-231 (NGGGTAGPGGTGGSGGGGGGGGGGGGGVGG). The segment covering 252 to 273 (AANSASNSSTSSEASNSSQQNN) has biased composition (low complexity). The ARID domain occupies 293–385 (DPKRKEFLDD…YLYPYECEKK (93 aa)). 3 disordered regions span residues 501–633 (GMPP…VGSG), 662–775 (PSMG…GKLN), and 826–877 (QSET…DQDM). Positions 512-550 (HQQQHSQQQQQQQHHHQQQQQQQSQQQHHLQQQRQRSQS) are enriched in low complexity. The segment covering 570-600 (HNNNSPPGSAHTSPQQREALNLSDSPPNLTN) has biased composition (polar residues). 2 positions are modified to phosphoserine: Ser592 and Ser594. Residues 601–621 (IKREREREPTPEPVDQDDKFV) show a composition bias toward basic and acidic residues. At Ser720 the chain carries Phosphoserine. One can recognise an REKLES domain in the interval 731–825 (TTGGSVGHRH…GVLVANVPLS (95 aa)). Over residues 737 to 751 (GHRHSSPVSTKKKGG) the composition is skewed to basic residues. Over residues 841-853 (TVEEEKDEEEEEE) the composition is skewed to acidic residues. The span at 854-870 (PKAAEEESHRSPVKQEN) shows a compositional bias: basic and acidic residues.

As to expression, present in the pharyngeal muscles, hindgut epithelium, amnioserosa, ring gland, midgut-hindgut junction, posterior region of each brain lobe, longitudinal glial cells of the CNS and the salivary gland duct of germ-band retracted embryos.

The protein localises to the nucleus. Its function is as follows. Transcription factor which is a downstream target of gcm and repo. Directly or indirectly activates the transcription of locos and pros, which are essential for the development of some glial cells. Plays an essential role in defining the cell shape and migration characteristics of longitudinal glia that enable them to establish a normal axon scaffold. This Drosophila melanogaster (Fruit fly) protein is Protein dead ringer (retn).